The sequence spans 312 residues: Glyceraldehyde-3-phosphate dehydrogenase, cytosolic (312 aa).

NAD(+)-binding positions include 5 to 6 (RI) and aspartate 27. Residues 144 to 146 (SCT), threonine 175, 204 to 205 (TG), and arginine 227 contribute to the D-glyceraldehyde 3-phosphate site. Cysteine 145 (nucleophile) is an active-site residue. Asparagine 309 contacts NAD(+).

Belongs to the glyceraldehyde-3-phosphate dehydrogenase family. As to quaternary structure, homotetramer.

Its subcellular location is the cytoplasm. The enzyme catalyses D-glyceraldehyde 3-phosphate + phosphate + NAD(+) = (2R)-3-phospho-glyceroyl phosphate + NADH + H(+). It functions in the pathway carbohydrate degradation; glycolysis; pyruvate from D-glyceraldehyde 3-phosphate: step 1/5. In terms of biological role, key enzyme in glycolysis that catalyzes the first step of the pathway by converting D-glyceraldehyde 3-phosphate (G3P) into 3-phospho-D-glyceroyl phosphate. Essential for the maintenance of cellular ATP levels and carbohydrate metabolism. The protein is Glyceraldehyde-3-phosphate dehydrogenase, cytosolic (GapC) of Scenedesmus vacuolatus (Green alga).